Here is a 69-residue protein sequence, read N- to C-terminus: Conotoxin Eb6.21 (69 aa).

The signal sequence occupies residues 1 to 17 (VLIIAVLFLTACQLTTA). The propeptide occupies 18–41 (ETYSRGRQKHRARRSTDKNSKWTR). 3 disulfides stabilise this stretch: Cys-43–Cys-57, Cys-50–Cys-61, and Cys-56–Cys-68.

Belongs to the conotoxin O1 superfamily. As to expression, expressed by the venom duct.

Its subcellular location is the secreted. The protein is Conotoxin Eb6.21 (E1) of Conus ebraeus (Hebrew cone).